We begin with the raw amino-acid sequence, 273 residues long: Dermonecrotic toxin LarSicTox-alphaVII1 (273 aa).

Residue histidine 5 is part of the active site. Mg(2+) contacts are provided by glutamate 25 and aspartate 27. The active-site Nucleophile is histidine 41. 2 disulfide bridges follow: cysteine 45–cysteine 51 and cysteine 47–cysteine 192. Aspartate 85 lines the Mg(2+) pocket.

It belongs to the arthropod phospholipase D family. Class II subfamily. Mg(2+) serves as cofactor. Expressed by the venom gland.

Its subcellular location is the secreted. The catalysed reaction is an N-(acyl)-sphingosylphosphocholine = an N-(acyl)-sphingosyl-1,3-cyclic phosphate + choline. It catalyses the reaction an N-(acyl)-sphingosylphosphoethanolamine = an N-(acyl)-sphingosyl-1,3-cyclic phosphate + ethanolamine. It carries out the reaction a 1-acyl-sn-glycero-3-phosphocholine = a 1-acyl-sn-glycero-2,3-cyclic phosphate + choline. The enzyme catalyses a 1-acyl-sn-glycero-3-phosphoethanolamine = a 1-acyl-sn-glycero-2,3-cyclic phosphate + ethanolamine. In terms of biological role, dermonecrotic toxins cleave the phosphodiester linkage between the phosphate and headgroup of certain phospholipids (sphingolipid and lysolipid substrates), forming an alcohol (often choline) and a cyclic phosphate. This toxin acts on sphingomyelin (SM). It may also act on ceramide phosphoethanolamine (CPE), lysophosphatidylcholine (LPC) and lysophosphatidylethanolamine (LPE), but not on lysophosphatidylserine (LPS), and lysophosphatidylglycerol (LPG). It acts by transphosphatidylation, releasing exclusively cyclic phosphate products as second products. Induces dermonecrosis, hemolysis, increased vascular permeability, edema, inflammatory response, and platelet aggregation. This chain is Dermonecrotic toxin LarSicTox-alphaVII1, found in Loxosceles arizonica (Arizona brown spider).